A 295-amino-acid polypeptide reads, in one-letter code: MTATIIDGKIISAELRARVAAEVTRIKADHGITPGLAVVLVGSDPASEVYVRSKHKQTQEAGMASFEHRLPADVPQAELLALIGQLNADPAVHGILVQLPLPKGLDSNAVIDAIDPAKDVDGLNPVNAGRLASGLFALTPCTPLGCIIMAKQVHASLEGMNAIVIGRSNLVGKPLVQLLLNENATVTIAHSRSRDLPALCRQADLVFAAVGRPEMVKGDWIKPGATVIDVGINRTPSPDGGKDKLVGDVAFAEAKDIAGAITPVPGGVGLMTVACLLVNTVRAASAIHGLPKPAV.

Residues 166-168 (GRS), Ser191, and Ile232 contribute to the NADP(+) site.

It belongs to the tetrahydrofolate dehydrogenase/cyclohydrolase family. Homodimer.

It catalyses the reaction (6R)-5,10-methylene-5,6,7,8-tetrahydrofolate + NADP(+) = (6R)-5,10-methenyltetrahydrofolate + NADPH. The enzyme catalyses (6R)-5,10-methenyltetrahydrofolate + H2O = (6R)-10-formyltetrahydrofolate + H(+). Its pathway is one-carbon metabolism; tetrahydrofolate interconversion. Functionally, catalyzes the oxidation of 5,10-methylenetetrahydrofolate to 5,10-methenyltetrahydrofolate and then the hydrolysis of 5,10-methenyltetrahydrofolate to 10-formyltetrahydrofolate. This chain is Bifunctional protein FolD, found in Rhodopseudomonas palustris (strain HaA2).